We begin with the raw amino-acid sequence, 373 residues long: Cyclin-A3-1 (373 aa).

Residues 50–80 (AVVLKPQPAPRGGKRAASHAAEPKKPAPPPA) are disordered.

This sequence belongs to the cyclin family. Cyclin AB subfamily.

The protein is Cyclin-A3-1 (CYCA3-1) of Oryza sativa subsp. japonica (Rice).